Here is a 242-residue protein sequence, read N- to C-terminus: ATP synthase subunit a (242 aa).

6 helical membrane passes run 29–49 (SSIY…LAFY), 84–104 (FIPL…LGMT), 114–134 (IIVT…VGFV), 140–160 (FLTL…MIVI), 181–201 (MAGH…MIYL), and 203–223 (FLPI…AILQ).

Belongs to the ATPase A chain family. F-type ATPases have 2 components, CF(1) - the catalytic core - and CF(0) - the membrane proton channel. CF(1) has five subunits: alpha(3), beta(3), gamma(1), delta(1), epsilon(1). CF(0) has three main subunits: a(1), b(2) and c(9-12). The alpha and beta chains form an alternating ring which encloses part of the gamma chain. CF(1) is attached to CF(0) by a central stalk formed by the gamma and epsilon chains, while a peripheral stalk is formed by the delta and b chains.

It is found in the cell inner membrane. Its function is as follows. Key component of the proton channel; it plays a direct role in the translocation of protons across the membrane. This Rickettsia akari (strain Hartford) protein is ATP synthase subunit a.